The following is a 365-amino-acid chain: Glutamate 5-kinase 1 (365 aa).

ATP is bound at residue Lys9. Ser49, Asp136, and Asn148 together coordinate substrate. ATP contacts are provided by residues 168–169 (TD) and 210–216 (TGGMKSK). Residues 276–353 (SGKITVDEGA…DEFHHEEGIE (78 aa)) form the PUA domain.

Belongs to the glutamate 5-kinase family.

The protein localises to the cytoplasm. It catalyses the reaction L-glutamate + ATP = L-glutamyl 5-phosphate + ADP. It functions in the pathway amino-acid biosynthesis; L-proline biosynthesis; L-glutamate 5-semialdehyde from L-glutamate: step 1/2. In terms of biological role, catalyzes the transfer of a phosphate group to glutamate to form L-glutamate 5-phosphate. The protein is Glutamate 5-kinase 1 of Bacillus licheniformis (strain ATCC 14580 / DSM 13 / JCM 2505 / CCUG 7422 / NBRC 12200 / NCIMB 9375 / NCTC 10341 / NRRL NRS-1264 / Gibson 46).